The following is a 1022-amino-acid chain: Dihydropyrimidine dehydrogenase [NADP(+)] (1022 aa).

Residues 26–45 (ANVHSTASKKNEKKHWKRNP) form a disordered region. The 4Fe-4S ferredoxin-type 1 domain maps to 69 to 100 (ERGALREALRCLKCADAPCQKSCPTNLDIKSF). Residues C79, C82, C87, and C91 each contribute to the [4Fe-4S] cluster site. V129 contacts FAD. The [4Fe-4S] cluster site is built by C130, C136, C140, and Q156. FAD is bound by residues 194-198 (GCGPA), 218-226 (EKQKYIGGL), R235, and L261. NADP(+)-binding positions include 340–343 (AGDT), 364–365 (RK), R371, 437–439 (AFG), and 481–487 (DIAGFAN). 480–489 (GDIAGFANTT) is a binding site for FAD. Residues S550 and 574–575 (KT) each bind FMN. Residues N609 and 668–670 (NLS) each bind substrate. C671 acts as the Proton acceptor in catalysis. K709 serves as a coordination point for FMN. Position 736 to 737 (736 to 737 (NT)) interacts with substrate. FMN contacts are provided by residues G767, 793–795 (TGG), and 816–817 (CS). 4Fe-4S ferredoxin-type domains are found at residues 943-975 (VQAL…FDPE) and 976-1006 (THLP…MVSR). Positions 952, 955, 958, 962, 985, 988, 991, and 995 each coordinate [4Fe-4S] cluster.

Belongs to the dihydropyrimidine dehydrogenase family. As to quaternary structure, homodimer. FAD serves as cofactor. It depends on FMN as a cofactor. The cofactor is [4Fe-4S] cluster.

It localises to the cytoplasm. It carries out the reaction 5,6-dihydrouracil + NADP(+) = uracil + NADPH + H(+). The catalysed reaction is 5,6-dihydrothymine + NADP(+) = thymine + NADPH + H(+). The protein operates within amino-acid biosynthesis; beta-alanine biosynthesis. Its function is as follows. Involved in pyrimidine base degradation. Catalyzes the reduction of uracil and thymine. Also involved the degradation of the chemotherapeutic drug 5-fluorouracil. The protein is Dihydropyrimidine dehydrogenase [NADP(+)] (dpyd) of Danio rerio (Zebrafish).